Consider the following 172-residue polypeptide: Adenine phosphoribosyltransferase (172 aa).

This sequence belongs to the purine/pyrimidine phosphoribosyltransferase family. Homodimer.

The protein resides in the cytoplasm. It catalyses the reaction AMP + diphosphate = 5-phospho-alpha-D-ribose 1-diphosphate + adenine. Its pathway is purine metabolism; AMP biosynthesis via salvage pathway; AMP from adenine: step 1/1. Catalyzes a salvage reaction resulting in the formation of AMP, that is energically less costly than de novo synthesis. This Clostridium botulinum (strain Eklund 17B / Type B) protein is Adenine phosphoribosyltransferase.